We begin with the raw amino-acid sequence, 152 residues long: Large ribosomal subunit protein uL15 (152 aa).

The tract at residues 1-57 (MTSTLNTLKSNSGSRKKKLRKGRGIAAGQGASCGFGMRGQKSRSGRPTRPGFEGGQM) is disordered. The span at 14-23 (SRKKKLRKGR) shows a compositional bias: basic residues. The span at 25–37 (IAAGQGASCGFGM) shows a compositional bias: gly residues.

It belongs to the universal ribosomal protein uL15 family. Part of the 50S ribosomal subunit.

Its function is as follows. Binds to the 23S rRNA. In Prochlorococcus marinus (strain AS9601), this protein is Large ribosomal subunit protein uL15.